The sequence spans 642 residues: Protein INCREASED PETAL GROWTH ANISOTROPY 1 (642 aa).

A disordered region spans residues 1 to 60 (MVAGKVRVTMGFHKSPSTKKTKDMPSPLPLPPPPPPPLKPPSSGSATTKPPINPSKPGFT). Residues 26–40 (SPLPLPPPPPPPLKP) are compositionally biased toward pro residues. Positions 80–183 (AASHNGVVSE…EAEIVELRKL (104 aa)) form a coiled coil. The disordered stretch occupies residues 223–351 (NLPEPITNQE…PPKSLSIASA (129 aa)). Residues 247 to 256 (DIYRKDEIES) show a composition bias toward basic and acidic residues. The segment covering 258-277 (SRSSNSEELTESSSLSTVRS) has biased composition (low complexity). The span at 302 to 344 (DPPPQKSIPPPPPPPPPPLLQQPPPPPSVSKAPPPPPPPPPPK) shows a compositional bias: pro residues.

It belongs to the IPGA1 family. In terms of assembly, associates to cortical microtubules via its N-terminal region. Interacts with ANGUSTIFOLIA (AN) on microtubule upon mechanical stress to regulate microtubule organization. Binds to the microtubule-severing enzyme KATANIN (KTN1). As to expression, expressed ubiquitously at all development stages, with highest in developing petals. During mechanical stress, accumulates in granules on microtubules.

The protein resides in the cytoplasm. Its subcellular location is the cytoskeleton. It localises to the cytosol. It is found in the cell membrane. Functionally, microtubule-associated protein involved in the regulation of anisotropic petal and cotyledons growth and shape by affecting cortical microtubule organization. Prevents cortical microtubules organization into parallel arrays oriented perpendicular to the axis of cell elongation thus limiting anisotropic cell growth in the late phases of petal development. Cooperatively with ANGUSTIFOLIA (AN), negatively regulates cortical microtubules (CMTs) organization in response to mechanical stress and modulates pavement cells morphogenesis leading to puzzle shape, probably in an AAA1/KTN1-dependent manner. This is Protein INCREASED PETAL GROWTH ANISOTROPY 1 from Arabidopsis thaliana (Mouse-ear cress).